Consider the following 192-residue polypeptide: Imidazole glycerol phosphate synthase subunit HisH (192 aa).

The region spanning 1–192 (MIAIIDYGLG…QALKGGFIND (192 aa)) is the Glutamine amidotransferase type-1 domain. The Nucleophile role is filled by cysteine 77. Residues histidine 169 and glutamate 171 contribute to the active site.

As to quaternary structure, heterodimer of HisH and HisF.

Its subcellular location is the cytoplasm. The catalysed reaction is 5-[(5-phospho-1-deoxy-D-ribulos-1-ylimino)methylamino]-1-(5-phospho-beta-D-ribosyl)imidazole-4-carboxamide + L-glutamine = D-erythro-1-(imidazol-4-yl)glycerol 3-phosphate + 5-amino-1-(5-phospho-beta-D-ribosyl)imidazole-4-carboxamide + L-glutamate + H(+). The enzyme catalyses L-glutamine + H2O = L-glutamate + NH4(+). It participates in amino-acid biosynthesis; L-histidine biosynthesis; L-histidine from 5-phospho-alpha-D-ribose 1-diphosphate: step 5/9. Functionally, IGPS catalyzes the conversion of PRFAR and glutamine to IGP, AICAR and glutamate. The HisH subunit catalyzes the hydrolysis of glutamine to glutamate and ammonia as part of the synthesis of IGP and AICAR. The resulting ammonia molecule is channeled to the active site of HisF. The chain is Imidazole glycerol phosphate synthase subunit HisH from Staphylococcus epidermidis (strain ATCC 35984 / DSM 28319 / BCRC 17069 / CCUG 31568 / BM 3577 / RP62A).